The following is a 116-amino-acid chain: Large ribosomal subunit protein bL19 (116 aa).

Belongs to the bacterial ribosomal protein bL19 family.

Its function is as follows. This protein is located at the 30S-50S ribosomal subunit interface and may play a role in the structure and function of the aminoacyl-tRNA binding site. In Histophilus somni (strain 129Pt) (Haemophilus somnus), this protein is Large ribosomal subunit protein bL19.